Here is a 234-residue protein sequence, read N- to C-terminus: MRRTLFVLFVVAFCFIGSVIANLSLPPGFSLRKRLPRSLVDILHLRHEQGLRDDTELRNWLSKQQPAMNKMFSSSSRENGSEKPVVSDVLPKNRAINIFASLTRQFEPIESRLNDSSKNITVLAPRNSAIQSLPRKPWENPEDYEKFGGVSAYEGQEGEDRAKQNLQRFVEAHIIPASPWREGEEMETLGGEKLKWIKKGDKIYIQPGNVEVDNIAETVINGELWILNSVLNYR.

Residues M1–A21 form the signal peptide. The FAS1 domain maps to K83–L231.

The protein resides in the vacuole. The sequence is that of FAS1 domain-containing protein AFUA_8G05360 from Aspergillus fumigatus (strain ATCC MYA-4609 / CBS 101355 / FGSC A1100 / Af293) (Neosartorya fumigata).